The chain runs to 198 residues: ATP-dependent Clp protease proteolytic subunit 2 (198 aa).

The active-site Nucleophile is the Ser-94. Residue His-119 is part of the active site.

Belongs to the peptidase S14 family. As to quaternary structure, fourteen ClpP subunits assemble into 2 heptameric rings which stack back to back to give a disk-like structure with a central cavity, resembling the structure of eukaryotic proteasomes.

It localises to the cytoplasm. The enzyme catalyses Hydrolysis of proteins to small peptides in the presence of ATP and magnesium. alpha-casein is the usual test substrate. In the absence of ATP, only oligopeptides shorter than five residues are hydrolyzed (such as succinyl-Leu-Tyr-|-NHMec, and Leu-Tyr-Leu-|-Tyr-Trp, in which cleavage of the -Tyr-|-Leu- and -Tyr-|-Trp bonds also occurs).. In terms of biological role, cleaves peptides in various proteins in a process that requires ATP hydrolysis. Has a chymotrypsin-like activity. Plays a major role in the degradation of misfolded proteins. This Borreliella burgdorferi (strain ATCC 35210 / DSM 4680 / CIP 102532 / B31) (Borrelia burgdorferi) protein is ATP-dependent Clp protease proteolytic subunit 2.